A 502-amino-acid chain; its full sequence is UDP-N-acetylmuramate--L-alanine ligase (502 aa).

120-126 contacts ATP; it reads GTHGKTS.

This sequence belongs to the MurCDEF family.

The protein localises to the cytoplasm. It carries out the reaction UDP-N-acetyl-alpha-D-muramate + L-alanine + ATP = UDP-N-acetyl-alpha-D-muramoyl-L-alanine + ADP + phosphate + H(+). It functions in the pathway cell wall biogenesis; peptidoglycan biosynthesis. Functionally, cell wall formation. The chain is UDP-N-acetylmuramate--L-alanine ligase from Rhodococcus erythropolis (strain PR4 / NBRC 100887).